Here is a 333-residue protein sequence, read N- to C-terminus: Protein FLAP1 homolog A (333 aa).

The helical transmembrane segment at 26–46 (VVIIFVLAFTLVFTPTFEAEA) threads the bilayer. The tract at residues 53–74 (IGGGSFRAPSAPSRSYSGPSGG) is disordered. The span at 58–70 (FRAPSAPSRSYSG) shows a compositional bias: low complexity. 2 helical membrane-spanning segments follow: residues 92–112 (IIPF…LVMI) and 261–281 (GEYI…LPAV).

The protein belongs to the FLAP family.

The protein localises to the cellular thylakoid membrane. It is found in the cell inner membrane. In terms of biological role, essential for photosynthetic growth under fluctuating light by modulating PxcA- and PxcL-dependent intracellular pH regulation via proton transport (e.g. transient pH reduction upon transition from dark to light followed by an increase in the light until light-to-dark shift). The chain is Protein FLAP1 homolog A from Synechocystis sp. (strain ATCC 27184 / PCC 6803 / Kazusa).